Reading from the N-terminus, the 1105-residue chain is SWI/SNF complex subunit SMARCC1 (1105 aa).

Ala-2 bears the N-acetylalanine mark. The tract at residues 28–302 (LAVYRRKDGG…PVSFRQRIST (275 aa)) is marR-like, BRCT and chromo domains module. Positions 38-164 (PATKFWESPE…IEKTLVQNNC (127 aa)) constitute a MarR-like domain. Residues 168 to 211 (PNIYLIPDIDLKLANKLKDIIKRHQGTFTDEKSKASHHIYPYSS) enclose the BRCT; N-terminus domain. Lys-179 is covalently cross-linked (Glycyl lysine isopeptide (Lys-Gly) (interchain with G-Cter in SUMO2)). A Chromo domain is found at 217–245 (EWLRPVMRKEKQVLVHWGFYPDSYDTWVH). One can recognise a BRCT; C-terminus domain in the interval 261 to 285 (KPWKVHVKWILDTDIFNEWMNEEDY). Residues 296–439 (FRQRISTKNE…DQSRSVDLGE (144 aa)) form a disordered region. Residues 302 to 318 (TKNEEPVRSPERRDRKA) are compositionally biased toward basic and acidic residues. Phosphoserine is present on residues Ser-310, Ser-328, and Ser-330. Residue Thr-335 is modified to Phosphothreonine. Lys-345 and Lys-346 each carry N6-acetyllysine. Phosphoserine is present on Ser-350. Residue Lys-354 is modified to N6-acetyllysine. Residue Ser-357 is modified to Phosphoserine. Lys-359 carries the post-translational modification N6-acetyllysine; alternate. Lys-359 is covalently cross-linked (Glycyl lysine isopeptide (Lys-Gly) (interchain with G-Cter in SUMO2); alternate). A Phosphothreonine modification is found at Thr-398. Residues 449-546 (IIIPSYASWF…YQVDPESRPM (98 aa)) enclose the SWIRM domain. The residue at position 573 (Ser-573) is a Phosphoserine. A Glycyl lysine isopeptide (Lys-Gly) (interchain with G-Cter in SUMO2) cross-link involves residue Lys-592. The region spanning 618–669 (SAGREWTEQETLLLLEALEMYKDDWNKVSEHVGSRTQDECILHFLRLPIEDP) is the SANT domain. Lys-739 is covalently cross-linked (Glycyl lysine isopeptide (Lys-Gly) (interchain with G-Cter in SUMO2)). The interval 745–860 (ARASGKVDPT…DTGKKKVEHE (116 aa)) is disordered. The segment covering 776 to 785 (AEEEKMEADP) has biased composition (acidic residues). Positions 789–860 (QPEKAENKVE…DTGKKKVEHE (72 aa)) are enriched in basic and acidic residues. Lys-796 participates in a covalent cross-link: Glycyl lysine isopeptide (Lys-Gly) (interchain with G-Cter in SUMO2). Phosphoserine is present on residues Ser-822 and Ser-825. Glycyl lysine isopeptide (Lys-Gly) (interchain with G-Cter in SUMO2) cross-links involve residues Lys-829 and Lys-856. Positions 914–946 (FEELETIMDREKEALEQQRQQLLTERQNFHMEQ) form a coiled coil. Lys-948 carries the post-translational modification N6-acetyllysine. Disordered regions lie at residues 956-1028 (QQME…PGQH) and 1041-1105 (IHPS…SAAP). Residues 957–993 (QMEQQQHGQNPQQAHQHSGGPGLAPLGAAGHPGMMPH) show a composition bias toward low complexity. 2 stretches are compositionally biased toward pro residues: residues 994-1017 (QQPP…PGQI) and 1048-1057 (PTPPGMPPMP). An Asymmetric dimethylarginine modification is found at Arg-1064. Residues 1073 to 1105 (MYPPPPQQQPPPPPPADGVPPPPAPGPPASAAP) are compositionally biased toward pro residues.

The protein belongs to the SMARCC family. As to quaternary structure, component of the multiprotein chromatin-remodeling complexes SWI/SNF: SWI/SNF-A (BAF), SWI/SNF-B (PBAF) and related complexes. The canonical complex contains a catalytic subunit (either SMARCA4/BRG1/BAF190A or SMARCA2/BRM/BAF190B) and at least SMARCE1, ACTL6A/BAF53, SMARCC1/BAF155, SMARCC2/BAF170, and SMARCB1/SNF5/BAF47. Other subunits specific to each of the complexes may also be present permitting several possible combinations developmentally and tissue specific. Component of the BAF complex, which includes at least actin (ACTB), ARID1A/BAF250A, ARID1B/BAF250B, SMARCA2/BRM, SMARCA4/BRG1, ACTL6A/BAF53, ACTL6B/BAF53B, SMARCE1/BAF57, SMARCC1/BAF155, SMARCC2/BAF170, SMARCB1/SNF5/INI1, and one or more SMARCD1/BAF60A, SMARCD2/BAF60B, or SMARCD3/BAF60C. In muscle cells, the BAF complex also contains DPF3. Component of neural progenitors-specific chromatin remodeling complex (npBAF complex) composed of at least, ARID1A/BAF250A or ARID1B/BAF250B, SMARCD1/BAF60A, SMARCD3/BAF60C, SMARCA2/BRM/BAF190B, SMARCA4/BRG1/BAF190A, SMARCB1/BAF47, SMARCC1/BAF155, SMARCE1/BAF57, SMARCC2/BAF170, PHF10/BAF45A, ACTL6A/BAF53A and actin. Component of neuron-specific chromatin remodeling complex (nBAF complex) composed of at least, ARID1A/BAF250A or ARID1B/BAF250B, SMARCD1/BAF60A, SMARCD3/BAF60C, SMARCA2/BRM/BAF190B, SMARCA4/BRG1/BAF190A, SMARCB1/BAF47, SMARCC1/BAF155, SMARCE1/BAF57, SMARCC2/BAF170, DPF1/BAF45B, DPF3/BAF45C, ACTL6B/BAF53B and actin. Component of the SWI/SNF-B (PBAF) chromatin remodeling complex, at least composed of SMARCA4/BRG1, SMARCB1/BAF47/SNF5, ACTL6A/BAF53A or ACTL6B/BAF53B, SMARCE1/BAF57, SMARCD1/BAF60A, SMARCD2/BAF60B, perhaps SMARCD3/BAF60C, SMARCC1/BAF155, SMARCC2/BAF170, PBRM1/BAF180, ARID2/BAF200 and actin. Component of SWI/SNF (GBAF) subcomplex, which includes at least BICRA or BICRAL (mutually exclusive), BRD9, SS18, SMARCA2/BRM, SMARCA4/BRG1/BAF190A, ACTL6A/BAF53, SMARCC1/BAF155, and SMARCD1/BAF60A. May also interact with the SIN3A histone deacetylase transcription repressor complex in conjunction with SMARCA2 and SMARCA4. The minimal complex composed of SMARCC1 and SMARCA4 seems to be able to associate with cyclin such as CCNE1 or transcription factors such as KLF1 or GATA1. Interacts with NR3C1 and SMARD1. Interacts with TRIP12; leading to disrupt interaction between TRIP12 and SMARCE1 and prevent SMARCE1 ubiquitination. Interacts with CEBPB (when not methylated). Interacts with KDM6B. Interacts with MKKS; the interaction takes place predominantly in the cytoplasm and may modulate SMARCC1 location. Interacts with DPF2. Interacts with PRDM1/BLIMP1. Interacts with DPF3a (isoform 2 of DPF3/BAF45C) and with HDGFL2 in a DPF3a-dependent manner. In terms of processing, phosphorylated on undefined residues at the G2/M transition by ERK1 and other kinases. This may contribute to cell cycle specific inactivation of remodeling complexes containing the phosphorylated protein. As to expression, expressed in brain, heart, muscle, placenta, lung, liver, muscle, kidney and pancreas.

The protein resides in the nucleus. Its subcellular location is the cytoplasm. In terms of biological role, involved in transcriptional activation and repression of select genes by chromatin remodeling (alteration of DNA-nucleosome topology). Component of SWI/SNF chromatin remodeling complexes that carry out key enzymatic activities, changing chromatin structure by altering DNA-histone contacts within a nucleosome in an ATP-dependent manner. May stimulate the ATPase activity of the catalytic subunit of the complex. Belongs to the neural progenitors-specific chromatin remodeling complex (npBAF complex) and the neuron-specific chromatin remodeling complex (nBAF complex). During neural development a switch from a stem/progenitor to a postmitotic chromatin remodeling mechanism occurs as neurons exit the cell cycle and become committed to their adult state. The transition from proliferating neural stem/progenitor cells to postmitotic neurons requires a switch in subunit composition of the npBAF and nBAF complexes. As neural progenitors exit mitosis and differentiate into neurons, npBAF complexes which contain ACTL6A/BAF53A and PHF10/BAF45A, are exchanged for homologous alternative ACTL6B/BAF53B and DPF1/BAF45B or DPF3/BAF45C subunits in neuron-specific complexes (nBAF). The npBAF complex is essential for the self-renewal/proliferative capacity of the multipotent neural stem cells. The nBAF complex along with CREST plays a role regulating the activity of genes essential for dendrite growth. The chain is SWI/SNF complex subunit SMARCC1 from Homo sapiens (Human).